The chain runs to 325 residues: Probable tRNA-dihydrouridine synthase 2 (325 aa).

18–20 (PME) contributes to the FMN binding site. Cys105 serves as the catalytic Proton donor. FMN-binding positions include Lys143, 208 to 210 (NGD), and 232 to 233 (GR).

Belongs to the Dus family. FMN serves as cofactor.

It carries out the reaction a 5,6-dihydrouridine in tRNA + NAD(+) = a uridine in tRNA + NADH + H(+). The enzyme catalyses a 5,6-dihydrouridine in tRNA + NADP(+) = a uridine in tRNA + NADPH + H(+). Functionally, catalyzes the synthesis of 5,6-dihydrouridine (D), a modified base found in the D-loop of most tRNAs, via the reduction of the C5-C6 double bond in target uridines. The sequence is that of Probable tRNA-dihydrouridine synthase 2 (dus2) from Bacillus subtilis (strain 168).